The sequence spans 558 residues: Oxygen-dependent choline dehydrogenase (558 aa).

8 to 37 (DYIIIGAGSAGNVLATRLTEDSDVSVLLLE) serves as a coordination point for FAD. His-475 functions as the Proton acceptor in the catalytic mechanism.

This sequence belongs to the GMC oxidoreductase family. It depends on FAD as a cofactor.

It carries out the reaction choline + A = betaine aldehyde + AH2. The catalysed reaction is betaine aldehyde + NAD(+) + H2O = glycine betaine + NADH + 2 H(+). It functions in the pathway amine and polyamine biosynthesis; betaine biosynthesis via choline pathway; betaine aldehyde from choline (cytochrome c reductase route): step 1/1. Involved in the biosynthesis of the osmoprotectant glycine betaine. Catalyzes the oxidation of choline to betaine aldehyde and betaine aldehyde to glycine betaine at the same rate. In Chromohalobacter salexigens (strain ATCC BAA-138 / DSM 3043 / CIP 106854 / NCIMB 13768 / 1H11), this protein is Oxygen-dependent choline dehydrogenase.